The primary structure comprises 142 residues: Large ribosomal subunit protein uL11 (142 aa).

The protein belongs to the universal ribosomal protein uL11 family. As to quaternary structure, part of the ribosomal stalk of the 50S ribosomal subunit. Interacts with L10 and the large rRNA to form the base of the stalk. L10 forms an elongated spine to which L12 dimers bind in a sequential fashion forming a multimeric L10(L12)X complex. In terms of processing, one or more lysine residues are methylated.

In terms of biological role, forms part of the ribosomal stalk which helps the ribosome interact with GTP-bound translation factors. The chain is Large ribosomal subunit protein uL11 from Mycobacterium ulcerans (strain Agy99).